Reading from the N-terminus, the 650-residue chain is Threonine--tRNA ligase (650 aa).

The TGS domain occupies 1–66 (MVQITLPDGS…DQDAKLAIVT (66 aa)). The tract at residues 247 to 538 (DHRKIGRDLD…LIENHAGAMP (292 aa)) is catalytic. Zn(2+) contacts are provided by C338, H389, and H515.

This sequence belongs to the class-II aminoacyl-tRNA synthetase family. As to quaternary structure, homodimer. Requires Zn(2+) as cofactor.

The protein resides in the cytoplasm. It carries out the reaction tRNA(Thr) + L-threonine + ATP = L-threonyl-tRNA(Thr) + AMP + diphosphate + H(+). Its function is as follows. Catalyzes the attachment of threonine to tRNA(Thr) in a two-step reaction: L-threonine is first activated by ATP to form Thr-AMP and then transferred to the acceptor end of tRNA(Thr). Also edits incorrectly charged L-seryl-tRNA(Thr). The chain is Threonine--tRNA ligase from Bordetella avium (strain 197N).